The following is a 118-amino-acid chain: Large ribosomal subunit protein bL20 (118 aa).

It belongs to the bacterial ribosomal protein bL20 family.

Its function is as follows. Binds directly to 23S ribosomal RNA and is necessary for the in vitro assembly process of the 50S ribosomal subunit. It is not involved in the protein synthesizing functions of that subunit. This Thermus thermophilus (strain ATCC BAA-163 / DSM 7039 / HB27) protein is Large ribosomal subunit protein bL20.